Here is a 566-residue protein sequence, read N- to C-terminus: Oxygen-dependent choline dehydrogenase (566 aa).

7-36 (DYIICGAGSAGNVLATRLTEDPDVTVLLLE) contacts FAD. The segment at 180–202 (NGYQQEGFGPMDRTVTPKGRRAS) is disordered. His-474 serves as the catalytic Proton acceptor.

This sequence belongs to the GMC oxidoreductase family. FAD is required as a cofactor.

It carries out the reaction choline + A = betaine aldehyde + AH2. The catalysed reaction is betaine aldehyde + NAD(+) + H2O = glycine betaine + NADH + 2 H(+). The protein operates within amine and polyamine biosynthesis; betaine biosynthesis via choline pathway; betaine aldehyde from choline (cytochrome c reductase route): step 1/1. Involved in the biosynthesis of the osmoprotectant glycine betaine. Catalyzes the oxidation of choline to betaine aldehyde and betaine aldehyde to glycine betaine at the same rate. The polypeptide is Oxygen-dependent choline dehydrogenase (Burkholderia orbicola (strain MC0-3)).